Reading from the N-terminus, the 462-residue chain is MREIVTLQIGGAGNAIGDSFWHVISHEHGVDYASGRFGGTSPLQLERINVFFNATASKRFYARTILIDTEASTIQRLNASSQLYRPENFVAGSESAGNNFARGYHTDGAAILDQVLENTRREVESVDSLQGFQLLHSIGGGTGSGLTSLIMEALVEQYPDNLLCNYVTIPSPNMSQVVVEPYNALLSTPALVNNSHLTFCLDNEALFQICNRNLKLKMSGYEHINHIVALTMSGITTCLRFPGQLNAGLRKIYVNMVPFPRLHFLIPGFAPLVTCKQQQFSKGTVSELVQQIFYSNNLLCAIDLRKGKLLTAAGIFRGRMSPREVDQLMTGVRNKNINNFVDWIPNNIKTAICDIPPRGLKMSATFIGNTTAIQTLFQRLLDASMSMLRRKAHLHWYTGEGMEEQEFQDAQQELQAIIDDYRSSAEGEDSGGGGGGGGGRSGSAESGEEEATPEAHCQYCTE.

Residues Glu-70, Ser-137, Gly-141, Thr-142, Gly-143, Asn-203, and Asn-225 each contribute to the GTP site. Mg(2+) is bound at residue Glu-70. The tract at residues 420–462 (DYRSSAEGEDSGGGGGGGGGRSGSAESGEEEATPEAHCQYCTE) is disordered. Over residues 430–441 (SGGGGGGGGGRS) the composition is skewed to gly residues.

The protein belongs to the tubulin family. Dimer of alpha and beta chains. A typical microtubule is a hollow water-filled tube with an outer diameter of 25 nm and an inner diameter of 15 nM. Alpha-beta heterodimers associate head-to-tail to form protofilaments running lengthwise along the microtubule wall with the beta-tubulin subunit facing the microtubule plus end conferring a structural polarity. Microtubules usually have 13 protofilaments but different protofilament numbers can be found in some organisms and specialized cells. It depends on Mg(2+) as a cofactor.

It localises to the cytoplasm. Its subcellular location is the cytoskeleton. Its function is as follows. Tubulin is the major constituent of microtubules, a cylinder consisting of laterally associated linear protofilaments composed of alpha- and beta-tubulin heterodimers. Microtubules grow by the addition of GTP-tubulin dimers to the microtubule end, where a stabilizing cap forms. Below the cap, tubulin dimers are in GDP-bound state, owing to GTPase activity of alpha-tubulin. This chain is beta-Tubulin at 65B, found in Drosophila melanogaster (Fruit fly).